Consider the following 199-residue polypeptide: uncharacterized protein (199 aa).

This sequence to M.jannaschii MJ1356.

This is an uncharacterized protein from Methanocaldococcus jannaschii (strain ATCC 43067 / DSM 2661 / JAL-1 / JCM 10045 / NBRC 100440) (Methanococcus jannaschii).